Reading from the N-terminus, the 147-residue chain is Probable disulfide formation protein (147 aa).

The chain crosses the membrane as a helical span at residues 9–28 (NYSLYFAWLTALIATLGSLY). A disulfide bridge connects residues C38 and C41. A run of 2 helical transmembrane segments spans residues 43 to 62 (YQRV…AYRT) and 69 to 86 (YALP…YQYL). C99 and C106 are oxidised to a cystine. Residues 115–138 (GFITLPFLGMLATLIMSFFLIMAF) form a helical membrane-spanning segment.

The protein belongs to the DsbB family. BdbC subfamily.

It is found in the cell inner membrane. Its function is as follows. Required for disulfide bond formation in some proteins. The sequence is that of Probable disulfide formation protein from Coxiella burnetii (strain CbuG_Q212) (Coxiella burnetii (strain Q212)).